The sequence spans 543 residues: Chaperonin GroEL 1 (543 aa).

ATP-binding positions include 29–32 (TLGP), 86–90 (DGTTT), glycine 413, 479–481 (NAA), and aspartate 495.

This sequence belongs to the chaperonin (HSP60) family. Forms a cylinder of 14 subunits composed of two heptameric rings stacked back-to-back. Interacts with the co-chaperonin GroES.

Its subcellular location is the cytoplasm. It catalyses the reaction ATP + H2O + a folded polypeptide = ADP + phosphate + an unfolded polypeptide.. In terms of biological role, together with its co-chaperonin GroES, plays an essential role in assisting protein folding. The GroEL-GroES system forms a nano-cage that allows encapsulation of the non-native substrate proteins and provides a physical environment optimized to promote and accelerate protein folding. This Prochlorococcus marinus (strain NATL2A) protein is Chaperonin GroEL 1.